A 751-amino-acid chain; its full sequence is Photosystem I P700 chlorophyll a apoprotein A1 (751 aa).

A run of 8 helical transmembrane segments spans residues Ile-73–Ala-96, Leu-159–His-182, Met-198–Leu-222, Thr-294–Tyr-312, Trp-349–Tyr-372, Leu-388–Val-414, Ala-436–His-458, and Phe-533–Leu-551. The [4Fe-4S] cluster site is built by Cys-575 and Cys-584. 2 helical membrane-spanning segments follow: residues His-591–Trp-612 and Leu-665–Phe-687. His-676 provides a ligand contact to chlorophyll a'. Chlorophyll a is bound by residues Met-684 and Tyr-692. Trp-693 is a binding site for phylloquinone. A helical transmembrane segment spans residues Ala-725–Ala-745.

It belongs to the PsaA/PsaB family. In terms of assembly, the PsaA/B heterodimer binds the P700 chlorophyll special pair and subsequent electron acceptors. PSI consists of a core antenna complex that captures photons, and an electron transfer chain that converts photonic excitation into a charge separation. The eukaryotic PSI reaction center is composed of at least 11 subunits. P700 is a chlorophyll a/chlorophyll a' dimer, A0 is one or more chlorophyll a, A1 is one or both phylloquinones and FX is a shared 4Fe-4S iron-sulfur center. serves as cofactor.

It localises to the plastid. The protein resides in the chloroplast thylakoid membrane. The catalysed reaction is reduced [plastocyanin] + hnu + oxidized [2Fe-2S]-[ferredoxin] = oxidized [plastocyanin] + reduced [2Fe-2S]-[ferredoxin]. Functionally, psaA and PsaB bind P700, the primary electron donor of photosystem I (PSI), as well as the electron acceptors A0, A1 and FX. PSI is a plastocyanin/cytochrome c6-ferredoxin oxidoreductase, converting photonic excitation into a charge separation, which transfers an electron from the donor P700 chlorophyll pair to the spectroscopically characterized acceptors A0, A1, FX, FA and FB in turn. Oxidized P700 is reduced on the lumenal side of the thylakoid membrane by plastocyanin or cytochrome c6. The protein is Photosystem I P700 chlorophyll a apoprotein A1 of Nephroselmis olivacea (Green alga).